Reading from the N-terminus, the 587-residue chain is Ankyrin repeat and SOCS box protein 14 (587 aa).

ANK repeat units follow at residues 82–112 (IGWI…SLWE), 117–146 (NGET…NPNA), 150–179 (EGNS…DVNL), 183–212 (NERT…HPDP), 216–245 (YGFT…IFCL), 248–277 (DSSS…DANI), 281–310 (SGHL…LAAI), 313–342 (SGIS…DVNF), 355–384 (HRKS…LPNQ), 385–414 (DPVN…NVNY), and 416–449 (CRVN…DTER). One can recognise an SOCS box domain in the interval 521 to 576 (WSEIHFILTNPRSLKHLCRLKIRKCMGRLHLRCPVFMSFLPLPNRLKAYVLYKEYD).

The protein belongs to the ankyrin SOCS box (ASB) family. Interacts with MAPRE2; this interaction promotes MAPRE2 degradation.

It functions in the pathway protein modification; protein ubiquitination. Its function is as follows. May be a substrate-recognition component of a SCF-like ECS (Elongin-Cullin-SOCS-box protein) E3 ubiquitin-protein ligase complex which mediates the ubiquitination and subsequent proteasomal degradation of target proteins. Plays a role in the inhibition of cardiomyocyte nuclear proliferation by mediating the ubiquitination and degradation of MAPRE2. The protein is Ankyrin repeat and SOCS box protein 14 (ASB14) of Homo sapiens (Human).